A 685-amino-acid chain; its full sequence is MTEQNRILCRELSLLAFNRRVLAQAEDKNVPLLERLRFLCIVSSNLDEFFEVRMAWLKRENKLHPRRRPDNGKMPSETIADVTEAARSLIRHQYDLFNNVLQPELARESIHFYRRRNWTGTQKKWIEDYFDRELLPILTPIGLDPSHPFPRPLNKSLNFAVELDGTDAFGRPSGMAIVQAPRILPRVVPLPSELCGGGHGFVFLSSILHAHVGKLFPGMNVKGCHQFRLTRDSDLTVDEEDVQNLRAAIQNELHDREYGDGVRLEVADTCPAYIRDFLLAQFRLTDAELYQVKGPVNLVRLNAVPDLVNRPDLKFPPHTPGRLKALGKNSPIFDLVRQSPILLHHPYQSFDPVVDMIREAAADPAVLAVKMTIYRTGTRSELVPALMKAALADKQVTVVVELMARFDEANNVNWAKQLEEAGAHVVYGVFGYKVHAKMALVIRREDGVLKRYAHLGTGNYHQGTSRIYTDFGLITADEQITADVNTLFMEITGLGKPGRLNKLYQSPFTLHKMVIGRIARETEHAKAGKPARITAKMNSLIEPTVIEALYRASAAGVQIDLIVRGMCTLRPGVKGLSENIRVRSIVGRQLEHARVYCFHNNGADDTFISSADWMGRNFFRRIETATPITAPELKKRVIREGLEMALADNTHAWLMQPDGGYIRAAPAEGESEADLQNDLWDLLRG.

Asn45 is a binding site for ATP. Residues Arg375 and Arg405 each coordinate Mg(2+). Catalysis depends on His435, which acts as the Phosphohistidine intermediate. Positions 468, 564, and 592 each coordinate ATP.

It belongs to the polyphosphate kinase 1 (PPK1) family. Requires Mg(2+) as cofactor. Post-translationally, an intermediate of this reaction is the autophosphorylated ppk in which a phosphate is covalently linked to a histidine residue through a N-P bond.

It carries out the reaction [phosphate](n) + ATP = [phosphate](n+1) + ADP. In terms of biological role, catalyzes the reversible transfer of the terminal phosphate of ATP to form a long-chain polyphosphate (polyP). The sequence is that of Polyphosphate kinase from Neisseria gonorrhoeae (strain ATCC 700825 / FA 1090).